A 197-amino-acid polypeptide reads, in one-letter code: Phospholipid hydroperoxide glutathione peroxidase (197 aa).

Ser40 is modified (phosphoserine). Residue Sec73 is part of the active site. A non-standard amino acid (selenocysteine) is located at residue Sec73. Val78 is subject to Phosphoserine.

Belongs to the glutathione peroxidase family. Monomer. Has a tendency to form higher mass oligomers. Interacts with FUNDC1; this interaction promotes GPX4 recruitment into mitochondria through TOM/TIM complex where it is degraded by mitophagy. Present primarily in testis. Expressed in flagella of epididymal sperm. Isoform Cytoplasmic: Highly expressed in testis. Present in spermatogonia, spermatocyte and spermatid (at protein level).

The protein resides in the nucleus. It localises to the nucleolus. Its subcellular location is the mitochondrion. The protein localises to the cytoplasm. It catalyses the reaction a hydroperoxy polyunsaturated fatty acid + 2 glutathione = a hydroxy polyunsaturated fatty acid + glutathione disulfide + H2O. The enzyme catalyses 2 glutathione + H2O2 = glutathione disulfide + 2 H2O. The catalysed reaction is tert-butyl hydroperoxide + 2 glutathione = tert-butanol + glutathione disulfide + H2O. It carries out the reaction cumene hydroperoxide + 2 glutathione = 2-phenylpropan-2-ol + glutathione disulfide + H2O. It catalyses the reaction (9S)-hydroperoxy-(10E,12Z)-octadecadienoate + 2 glutathione = (9S)-hydroxy-(10E,12Z)-octadecadienoate + glutathione disulfide + H2O. The enzyme catalyses (13S)-hydroperoxy-(9Z,11E)-octadecadienoate + 2 glutathione = (13S)-hydroxy-(9Z,11E)-octadecadienoate + glutathione disulfide + H2O. The catalysed reaction is (5S)-hydroperoxy-(6E,8Z,11Z,14Z)-eicosatetraenoate + 2 glutathione = (5S)-hydroxy-(6E,8Z,11Z,14Z)-eicosatetraenoate + glutathione disulfide + H2O. It carries out the reaction (12R)-hydroperoxy-(5Z,8Z,10E,14Z)-eicosatetraenoate + 2 glutathione = (12R)-hydroxy-(5Z,8Z,10E,14Z)-eicosatetraenoate + glutathione disulfide + H2O. It catalyses the reaction (12S)-hydroperoxy-(5Z,8Z,10E,14Z)-eicosatetraenoate + 2 glutathione = (12S)-hydroxy-(5Z,8Z,10E,14Z)-eicosatetraenoate + glutathione disulfide + H2O. The enzyme catalyses (15S)-hydroperoxy-(5Z,8Z,11Z,13E)-eicosatetraenoate + 2 glutathione = (15S)-hydroxy-(5Z,8Z,11Z,13E)-eicosatetraenoate + glutathione disulfide + H2O. The catalysed reaction is (5S)-hydroperoxy-(6E,8Z,11Z,14Z,17Z)-eicosapentaenoate + 2 glutathione = (5S)-hydroxy-(6E,8Z,11Z,14Z,17Z)-eicosapentaenoate + glutathione disulfide + H2O. It carries out the reaction (12S)-hydroperoxy-(5Z,8Z,10E,14Z,17Z)-eicosapentaenoate + 2 glutathione = (12S)-hydroxy-(5Z,8Z,10E,14Z,17Z)-eicosapentaenoate + glutathione disulfide + H2O. It catalyses the reaction (15S)-hydroperoxy-(5Z,8Z,11Z,13E,17Z)-eicosapentaenoate + 2 glutathione = (15S)-hydroxy-(5Z,8Z,11Z,13E,17Z)-eicosapentaenoate + glutathione disulfide + H2O. The enzyme catalyses (15S)-hydroperoxy-(11Z,13E)-eicosadienoate + 2 glutathione = (15S)-hydroxy-(11Z,13E)-eicosadienoate + glutathione disulfide + H2O. The catalysed reaction is (17S)-hydroperoxy-(4Z,7Z,10Z,13Z,15E,19Z)-docosahexaenoate + 2 glutathione = (17S)-hydroxy-(4Z,7Z,10Z,13Z,15E,19Z)-docosahexaenoate + glutathione disulfide + H2O. It carries out the reaction a hydroperoxy-1,2-diacyl-glycero-3-phosphocholine + 2 glutathione = a hydroxy-1,2-diacyl-glycero-3-phosphocholine + glutathione disulfide + H2O. In terms of biological role, essential antioxidant peroxidase that directly reduces phospholipid hydroperoxide even if they are incorporated in membranes and lipoproteins. Can also reduce fatty acid hydroperoxide, cholesterol hydroperoxide and thymine hydroperoxide. Plays a key role in protecting cells from oxidative damage by preventing membrane lipid peroxidation. Required to prevent cells from ferroptosis, a non-apoptotic cell death resulting from an iron-dependent accumulation of lipid reactive oxygen species. The presence of selenocysteine (Sec) versus Cys at the active site is essential for life: it provides resistance to overoxidation and prevents cells against ferroptosis. The presence of Sec at the active site is also essential for the survival of a specific type of parvalbumin-positive interneurons, thereby preventing against fatal epileptic seizures. May be required to protect cells from the toxicity of ingested lipid hydroperoxides. Required for normal sperm development and male fertility. Essential for maturation and survival of photoreceptor cells. Plays a role in a primary T-cell response to viral and parasitic infection by protecting T-cells from ferroptosis and by supporting T-cell expansion. Plays a role of glutathione peroxidase in platelets in the arachidonic acid metabolism. Reduces hydroperoxy ester lipids formed by a 15-lipoxygenase that may play a role as down-regulator of the cellular 15-lipoxygenase pathway. Can also reduce small soluble hydroperoxides such as H2O2, cumene hydroperoxide and tert-butyl hydroperoxide. Specifically able to suppress the production of leukotriene and prostaglandin in response to several stimuli by reducing fatty acid hydroperoxide. Functionally, specifically required to prevent mitochondrial cell death by mediating reduction of cardiolipin hydroperoxide. Also required for normal sperm development and male fertility. Its function is as follows. Required for male fertility by stabilizing the condensed chromatin in sperm nuclei. The sequence is that of Phospholipid hydroperoxide glutathione peroxidase from Rattus norvegicus (Rat).